A 290-amino-acid polypeptide reads, in one-letter code: Sodium/potassium-transporting ATPase subunit beta-2 (290 aa).

At 1–39 the chain is on the cytoplasmic side; the sequence is MVIQKEKKSCGQVVEEWKEFVWNPRTHQFMGRTGTSWAF. Residues 40–67 form a helical; Signal-anchor for type II membrane protein membrane-spanning segment; sequence ILLFYLVFYGFLTAMFTLTMWVMLQTVS. Residues 68–290 lie on the Extracellular side of the membrane; it reads DHTPKYQDRL…VAFKLRINKT (223 aa). N-linked (GlcNAc...) asparagine glycosylation is found at Asn-96 and Asn-118. A disulfide bridge connects residues Cys-129 and Cys-150. Residues Asn-153 and Asn-159 are each glycosylated (N-linked (GlcNAc...) asparagine). Cys-160 and Cys-177 are oxidised to a cystine. 3 N-linked (GlcNAc...) asparagine glycosylation sites follow: Asn-193, Asn-197, and Asn-238. Residues 193-290 form an immunoglobulin-like region; the sequence is NQSMNVTCAG…VAFKLRINKT (98 aa). The cysteines at positions 200 and 261 are disulfide-linked.

The protein belongs to the X(+)/potassium ATPases subunit beta family. The sodium/potassium-transporting ATPase is composed of a catalytic alpha subunit, an auxiliary non-catalytic beta subunit and an additional regulatory subunit. Interacts with BSG.

The protein localises to the cell membrane. Functionally, this is the non-catalytic component of the active enzyme, which catalyzes the hydrolysis of ATP coupled with the exchange of Na(+) and K(+) ions across the plasma membrane. The exact function of the beta-2 subunit is not known. Mediates cell adhesion of neurons and astrocytes, and promotes neurite outgrowth. This chain is Sodium/potassium-transporting ATPase subunit beta-2 (ATP1B2), found in Ochotona curzoniae (Black-lipped pika).